The primary structure comprises 545 residues: CTP synthase (545 aa).

The segment at Met1–Leu266 is amidoligase domain. Ser14 contributes to the CTP binding site. Ser14 lines the UTP pocket. Residues Ser15–Ile20 and Asp72 each bind ATP. Asp72 and Glu140 together coordinate Mg(2+). Residues Asp147–Glu149, Lys187–Gln192, and Lys223 each bind CTP. UTP-binding positions include Lys187–Gln192 and Lys223. Lys239 to Val241 is an ATP binding site. In terms of domain architecture, Glutamine amidotransferase type-1 spans Thr291–Arg542. Gly352 provides a ligand contact to L-glutamine. The Nucleophile; for glutamine hydrolysis role is filled by Cys379. Residues Leu380 to Gln383, Glu403, and Arg470 contribute to the L-glutamine site. Active-site residues include His515 and Glu517.

Belongs to the CTP synthase family. As to quaternary structure, homotetramer.

The catalysed reaction is UTP + L-glutamine + ATP + H2O = CTP + L-glutamate + ADP + phosphate + 2 H(+). It carries out the reaction L-glutamine + H2O = L-glutamate + NH4(+). It catalyses the reaction UTP + NH4(+) + ATP = CTP + ADP + phosphate + 2 H(+). It participates in pyrimidine metabolism; CTP biosynthesis via de novo pathway; CTP from UDP: step 2/2. With respect to regulation, allosterically activated by GTP, when glutamine is the substrate; GTP has no effect on the reaction when ammonia is the substrate. The allosteric effector GTP functions by stabilizing the protein conformation that binds the tetrahedral intermediate(s) formed during glutamine hydrolysis. Inhibited by the product CTP, via allosteric rather than competitive inhibition. Its function is as follows. Catalyzes the ATP-dependent amination of UTP to CTP with either L-glutamine or ammonia as the source of nitrogen. Regulates intracellular CTP levels through interactions with the four ribonucleotide triphosphates. This is CTP synthase from Yersinia enterocolitica serotype O:8 / biotype 1B (strain NCTC 13174 / 8081).